The following is a 322-amino-acid chain: 4-hydroxy-3-methylbut-2-enyl diphosphate reductase (322 aa).

C15 provides a ligand contact to [4Fe-4S] cluster. (2E)-4-hydroxy-3-methylbut-2-enyl diphosphate is bound by residues H44 and H77. Dimethylallyl diphosphate-binding residues include H44 and H77. H44 and H77 together coordinate isopentenyl diphosphate. C99 is a binding site for [4Fe-4S] cluster. H127 provides a ligand contact to (2E)-4-hydroxy-3-methylbut-2-enyl diphosphate. H127 contacts dimethylallyl diphosphate. H127 serves as a coordination point for isopentenyl diphosphate. Residue E129 is the Proton donor of the active site. Position 168 (T168) interacts with (2E)-4-hydroxy-3-methylbut-2-enyl diphosphate. Residue C198 participates in [4Fe-4S] cluster binding. (2E)-4-hydroxy-3-methylbut-2-enyl diphosphate contacts are provided by S226, S227, N228, and S270. 4 residues coordinate dimethylallyl diphosphate: S226, S227, N228, and S270. S226, S227, N228, and S270 together coordinate isopentenyl diphosphate.

Belongs to the IspH family. [4Fe-4S] cluster serves as cofactor.

It catalyses the reaction isopentenyl diphosphate + 2 oxidized [2Fe-2S]-[ferredoxin] + H2O = (2E)-4-hydroxy-3-methylbut-2-enyl diphosphate + 2 reduced [2Fe-2S]-[ferredoxin] + 2 H(+). The catalysed reaction is dimethylallyl diphosphate + 2 oxidized [2Fe-2S]-[ferredoxin] + H2O = (2E)-4-hydroxy-3-methylbut-2-enyl diphosphate + 2 reduced [2Fe-2S]-[ferredoxin] + 2 H(+). Its pathway is isoprenoid biosynthesis; dimethylallyl diphosphate biosynthesis; dimethylallyl diphosphate from (2E)-4-hydroxy-3-methylbutenyl diphosphate: step 1/1. It functions in the pathway isoprenoid biosynthesis; isopentenyl diphosphate biosynthesis via DXP pathway; isopentenyl diphosphate from 1-deoxy-D-xylulose 5-phosphate: step 6/6. In terms of biological role, catalyzes the conversion of 1-hydroxy-2-methyl-2-(E)-butenyl 4-diphosphate (HMBPP) into a mixture of isopentenyl diphosphate (IPP) and dimethylallyl diphosphate (DMAPP). Acts in the terminal step of the DOXP/MEP pathway for isoprenoid precursor biosynthesis. The sequence is that of 4-hydroxy-3-methylbut-2-enyl diphosphate reductase from Neisseria meningitidis serogroup A / serotype 4A (strain DSM 15465 / Z2491).